The following is a 282-amino-acid chain: UDP-N-acetylenolpyruvoylglucosamine reductase (282 aa).

An FAD-binding PCMH-type domain is found at 15-179 (IKSFAKYVYF…LSAEFEFEYK (165 aa)). Arg-157 is a catalytic residue. The active-site Proton donor is Ser-207. Residue Glu-278 is part of the active site.

Belongs to the MurB family. It depends on FAD as a cofactor.

It is found in the cytoplasm. The catalysed reaction is UDP-N-acetyl-alpha-D-muramate + NADP(+) = UDP-N-acetyl-3-O-(1-carboxyvinyl)-alpha-D-glucosamine + NADPH + H(+). The protein operates within cell wall biogenesis; peptidoglycan biosynthesis. Its function is as follows. Cell wall formation. This chain is UDP-N-acetylenolpyruvoylglucosamine reductase, found in Francisella tularensis subsp. tularensis (strain SCHU S4 / Schu 4).